The following is a 183-amino-acid chain: MTYLSQIEALLFVAGEEGLSLRHLASMLSLTPTALQQQLEKLSQKYEKDQHSSLCLIETANTYRLVTKEGFAELLRAYAKTPMNQSLSRASLEVLSIVAYKQPITRIEIDDIRGVNSSGALSKLLAFDLIREAGKKDVVGRPHLYATTDYFLDYMGINHLDELIEVSAVEPADEEIALFRTQD.

The protein belongs to the ScpB family. In terms of assembly, homodimer. Homodimerization may be required to stabilize the binding of ScpA to the Smc head domains. Component of a cohesin-like complex composed of ScpA, ScpB and the Smc homodimer, in which ScpA and ScpB bind to the head domain of Smc. The presence of the three proteins is required for the association of the complex with DNA.

It is found in the cytoplasm. In terms of biological role, participates in chromosomal partition during cell division. May act via the formation of a condensin-like complex containing Smc and ScpA that pull DNA away from mid-cell into both cell halves. The protein is Segregation and condensation protein B of Streptococcus pyogenes serotype M1.